The following is a 297-amino-acid chain: 4-hydroxy-tetrahydrodipicolinate synthase (297 aa).

Pyruvate is bound at residue threonine 47. Tyrosine 136 functions as the Proton donor/acceptor in the catalytic mechanism. Residue lysine 165 is the Schiff-base intermediate with substrate of the active site. Isoleucine 206 provides a ligand contact to pyruvate.

The protein belongs to the DapA family. Homotetramer; dimer of dimers.

Its subcellular location is the cytoplasm. It catalyses the reaction L-aspartate 4-semialdehyde + pyruvate = (2S,4S)-4-hydroxy-2,3,4,5-tetrahydrodipicolinate + H2O + H(+). It participates in amino-acid biosynthesis; L-lysine biosynthesis via DAP pathway; (S)-tetrahydrodipicolinate from L-aspartate: step 3/4. In terms of biological role, catalyzes the condensation of (S)-aspartate-beta-semialdehyde [(S)-ASA] and pyruvate to 4-hydroxy-tetrahydrodipicolinate (HTPA). The chain is 4-hydroxy-tetrahydrodipicolinate synthase from Campylobacter fetus subsp. fetus (strain 82-40).